We begin with the raw amino-acid sequence, 330 residues long: Elongation factor Ts (330 aa).

The involved in Mg(2+) ion dislocation from EF-Tu stretch occupies residues 79-82; the sequence is TDFV.

This sequence belongs to the EF-Ts family.

The protein localises to the cytoplasm. In terms of biological role, associates with the EF-Tu.GDP complex and induces the exchange of GDP to GTP. It remains bound to the aminoacyl-tRNA.EF-Tu.GTP complex up to the GTP hydrolysis stage on the ribosome. This Bacteroides thetaiotaomicron (strain ATCC 29148 / DSM 2079 / JCM 5827 / CCUG 10774 / NCTC 10582 / VPI-5482 / E50) protein is Elongation factor Ts.